The primary structure comprises 430 residues: Enolase (430 aa).

Q167 lines the (2R)-2-phosphoglycerate pocket. The active-site Proton donor is the E209. Mg(2+) contacts are provided by D246, E287, and D314. (2R)-2-phosphoglycerate contacts are provided by K339, R368, S369, and K390. The active-site Proton acceptor is K339.

It belongs to the enolase family. Requires Mg(2+) as cofactor.

Its subcellular location is the cytoplasm. The protein localises to the secreted. It is found in the cell surface. It carries out the reaction (2R)-2-phosphoglycerate = phosphoenolpyruvate + H2O. It participates in carbohydrate degradation; glycolysis; pyruvate from D-glyceraldehyde 3-phosphate: step 4/5. In terms of biological role, catalyzes the reversible conversion of 2-phosphoglycerate (2-PG) into phosphoenolpyruvate (PEP). It is essential for the degradation of carbohydrates via glycolysis. The protein is Enolase of Prochlorococcus marinus (strain AS9601).